The sequence spans 352 residues: Protein-glutamate methylesterase/protein-glutamine glutaminase 1 (352 aa).

In terms of domain architecture, Response regulatory spans 5–122; sequence KVLVVDDSAF…SLDVLSVKEE (118 aa). Asp56 carries the 4-aspartylphosphate modification. Residues 155–352 enclose the CheB-type methylesterase domain; sequence PDQDRKLNKL…EITEEVLSML (198 aa). Residues Ser170, His197, and Asp297 contribute to the active site.

The protein belongs to the CheB family. Phosphorylated by CheA. Phosphorylation of the N-terminal regulatory domain activates the methylesterase activity.

The protein resides in the cytoplasm. It catalyses the reaction [protein]-L-glutamate 5-O-methyl ester + H2O = L-glutamyl-[protein] + methanol + H(+). It carries out the reaction L-glutaminyl-[protein] + H2O = L-glutamyl-[protein] + NH4(+). Functionally, involved in chemotaxis. Part of a chemotaxis signal transduction system that modulates chemotaxis in response to various stimuli. Catalyzes the demethylation of specific methylglutamate residues introduced into the chemoreceptors (methyl-accepting chemotaxis proteins or MCP) by CheR. Also mediates the irreversible deamidation of specific glutamine residues to glutamic acid. In Syntrophomonas wolfei subsp. wolfei (strain DSM 2245B / Goettingen), this protein is Protein-glutamate methylesterase/protein-glutamine glutaminase 1.